The sequence spans 73 residues: Translation initiation factor IF-1 (73 aa).

An S1-like domain is found at 1 to 72 (MAKEDAIEVE…NRGRITYRSK (72 aa)).

The protein belongs to the IF-1 family. Component of the 30S ribosomal translation pre-initiation complex which assembles on the 30S ribosome in the order IF-2 and IF-3, IF-1 and N-formylmethionyl-tRNA(fMet); mRNA recruitment can occur at any time during PIC assembly.

The protein localises to the cytoplasm. Its function is as follows. One of the essential components for the initiation of protein synthesis. Stabilizes the binding of IF-2 and IF-3 on the 30S subunit to which N-formylmethionyl-tRNA(fMet) subsequently binds. Helps modulate mRNA selection, yielding the 30S pre-initiation complex (PIC). Upon addition of the 50S ribosomal subunit IF-1, IF-2 and IF-3 are released leaving the mature 70S translation initiation complex. This chain is Translation initiation factor IF-1, found in Syntrophobacter fumaroxidans (strain DSM 10017 / MPOB).